The primary structure comprises 493 residues: Cytochrome P450 710A3 (493 aa).

The helical transmembrane segment at 5–25 threads the bilayer; sequence VSLFASLTPYLVSALLLFLLL. Cysteine 435 serves as a coordination point for heme.

The protein belongs to the cytochrome P450 family. Requires heme as cofactor. Expressed in stems. Detected in primary root caps and immature petals.

Its subcellular location is the membrane. The catalysed reaction is 5-dehydroepisterol + NADPH + O2 + H(+) = ergosta-5,7,22,24(28)-tetraen-3beta-ol + NADP(+) + 2 H2O. In terms of biological role, required to form the C-22 double bond in the sterol side chain. Possesses in vitro C-22 desaturase activity toward beta-sitosterol and produces stigmasterol. This is Cytochrome P450 710A3 from Arabidopsis thaliana (Mouse-ear cress).